Consider the following 163-residue polypeptide: Nucleotide-binding protein Clos_1967 (163 aa).

Belongs to the YajQ family.

Functionally, nucleotide-binding protein. The polypeptide is Nucleotide-binding protein Clos_1967 (Alkaliphilus oremlandii (strain OhILAs) (Clostridium oremlandii (strain OhILAs))).